Here is a 126-residue protein sequence, read N- to C-terminus: Thioredoxin H-type 1 (126 aa).

The Thioredoxin domain occupies 2–120 (AANDATSSEE…LQQTIVKHAA (119 aa)). Active-site nucleophile residues include Cys46 and Cys49. Residues Cys46 and Cys49 are joined by a disulfide bond.

The protein belongs to the thioredoxin family. Plant H-type subfamily.

The protein localises to the cytoplasm. Participates in various redox reactions through the reversible oxidation of the active center dithiol to a disulfide. The H form is known to activate a number of cytosolic enzymes. The chain is Thioredoxin H-type 1 from Nicotiana tabacum (Common tobacco).